The following is a 272-amino-acid chain: MSRHSNTPATDASVLLVQLSDSHLFAEDGARLLGMDTAHSLEKVVERVAREQPRIDLILATGDVSQDGSLDSYTRFRRLSAPLAAPLRWFAGNHDEREPMQRATEGSDLLEQIVDVGNWRVVLLDSSIPGAVPGYLEDDQLDLLRRAIDSAGERFLLVSFHHHPVPIGSDWMDPIGLRNPQALFDLLAPYPQLRCLLWGHIHQEFDRQRGPLRLLASPSTCVQFAPGSSDFTLDRLAPGYRWLRLHDDGRLETGISRVDDVVFEVDYDTAGY.

Asp21, His23, Asp63, Asn93, His161, His200, and His202 together coordinate Fe cation. AMP contacts are provided by residues His23, Asp63, and Asn93–His94. His202 contributes to the AMP binding site.

Belongs to the cyclic nucleotide phosphodiesterase class-III family. In terms of assembly, monomer. A divalent metal cation is required as a cofactor.

It catalyses the reaction 3',5'-cyclic AMP + H2O = AMP + H(+). Its activity is regulated as follows. Activated by iron. Other divalent metal ions have no effect. In terms of biological role, hydrolyzes cAMP to 5'-AMP. Plays an important regulatory role in modulating the intracellular concentration of cAMP, thereby influencing cAMP-dependent processes. Specifically required for regulation of virulence factors. Can also hydrolyze cGMP, but cGMP is unlikely to be synthesized by P.aeruginosa and cAMP is probably the biologically relevant substrate for CpdA in vivo. In Pseudomonas aeruginosa, this protein is 3',5'-cyclic adenosine monophosphate phosphodiesterase CpdA.